The following is a 268-amino-acid chain: Tetraspanin-5 (268 aa).

At 1–17 (MSGKHYKGPEVSCCIKY) the chain is on the cytoplasmic side. A helical transmembrane segment spans residues 18–38 (FIFGFNVIFWFLGITFLGIGL). At 39–61 (WAWNEKGVLSNISSITDLGGFDP) the chain is on the extracellular side. Asn-49 carries an N-linked (GlcNAc...) asparagine glycan. A helical membrane pass occupies residues 62–82 (VWLFLVVGGVMFILGFAGCIG). Topologically, residues 83–92 (ALRENTFLLK) are cytoplasmic. A helical membrane pass occupies residues 93-113 (FFSVFLGIIFFLELTAGVLAF). Topologically, residues 114 to 232 (VFKDWIKDQL…PQFEKWLQDN (119 aa)) are extracellular. Disulfide bonds link Cys-153–Cys-221, Cys-154–Cys-186, Cys-170–Cys-180, and Cys-187–Cys-200. N-linked (GlcNAc...) asparagine glycosylation is found at Asn-169 and Asn-174. N-linked (GlcNAc...) asparagine glycosylation occurs at Asn-232. Residues 233–253 (LTIVAGIFIGIALLQIFGICL) traverse the membrane as a helical segment. The Cytoplasmic segment spans residues 254 to 268 (AQNLVSDIEAVRASW).

It belongs to the tetraspanin (TM4SF) family. As to quaternary structure, interacts with ADAM10; the interaction influences ADAM10 substrate specificity, endocytosis and turnover. In terms of processing, palmitoylated.

The protein localises to the cell membrane. Its function is as follows. Part of TspanC8 subgroup, composed of 6 members that interact with the transmembrane metalloprotease ADAM10. This interaction is required for ADAM10 exit from the endoplasmic reticulum and for enzymatic maturation and trafficking to the cell surface as well as substrate specificity. Different TspanC8/ADAM10 complexes have distinct substrates. Promotes ADAM10-mediated cleavage of CD44. Seems to regulate VE-cadherin expression in endothelial cells probably through interaction with ADAM10, promoting leukocyte transmigration. The protein is Tetraspanin-5 of Homo sapiens (Human).